The sequence spans 1391 residues: CAP-Gly domain-containing linker protein 1 (1391 aa).

A disordered region spans residues M1 to E53. Phosphoserine is present on S48. T50 is modified (phosphothreonine). Residues G78–R120 form the CAP-Gly 1 domain. The segment at G97–G101 is important for tubulin binding. Positions Q129–P182 are disordered. At S146 the chain carries Phosphoserine. Polar residues predominate over residues S146–P182. T181 is subject to Phosphothreonine. A phosphoserine mark is found at S194, S196, S199, and S203. In terms of domain architecture, CAP-Gly 2 spans G231–P273. Over residues T302–R331 the composition is skewed to low complexity. Positions T302 to T336 are disordered. At S309 the chain carries Phosphoserine. S311 bears the Phosphoserine; by PKA mark. 3 positions are modified to phosphoserine: S314, S347, and S1189. Positions T349–N1306 form a coiled coil. Residues K1251 to Q1272 form a disordered region. S1317 carries the post-translational modification Phosphoserine. The CCHC-type zinc finger occupies P1370 to D1387.

In terms of assembly, interacts with MTOR; phosphorylates and regulates CLIP1. Interacts (via CAP-Gly domains) with tubulin. Interacts with SLAIN2. Interacts with TUBA1B, MAPRE1 and MAPRE3. Interacts (via zinc finger) with DCTN1. Binds preferentially to tyrosinated microtubules, and only marginally to detyrosinated microtubules. Post-translationally, phosphorylated. Phosphorylation induces conformational changes by increasing the affinity of the N-terminus for C-terminus, resulting in inhibition of its function thus decreasing its binding to microtubules and DCTN1. Exhibits a folded, autoinhibited conformation when phosphorylated and an open conformation when dephosphorylated with increased binding affinity to microtubules and DCTN1. Phosphorylation regulates its recruitment to tyrosinated microtubules and the recruitment of vesicular cargo to microtubules in neurons. Phosphorylation by MTOR may positively regulate CLIP1 association with microtubules. Expressed in the testes (at protein level).

The protein resides in the cytoplasm. It localises to the cytoskeleton. It is found in the cytoplasmic vesicle membrane. Its subcellular location is the cell projection. The protein localises to the ruffle. Functionally, binds to the plus end of microtubules and regulates the dynamics of the microtubule cytoskeleton. Promotes microtubule growth and microtubule bundling. Links cytoplasmic vesicles to microtubules and thereby plays an important role in intracellular vesicle trafficking. Plays a role macropinocytosis and endosome trafficking. The protein is CAP-Gly domain-containing linker protein 1 (Clip1) of Mus musculus (Mouse).